We begin with the raw amino-acid sequence, 201 residues long: Dimethylsulfoniopropionate lyase DddQ (201 aa).

Residues His130, Glu134, Tyr136, and His169 each coordinate a divalent metal cation.

It belongs to the non-heme iron-dependent dioxygenase family. As to quaternary structure, homodimer. A divalent metal cation serves as cofactor.

The enzyme catalyses S,S-dimethyl-beta-propiothetin = acrylate + dimethyl sulfide + H(+). Functionally, may act as a dimethylsulfoniopropionate (DMSP) in vitro, releasing dimethyl sulfide (DMS). DMS is the principal form by which sulfur is transported from oceans to the atmosphere. The real activity of the protein is however subject to debate and it is unclear whether it constitutes a real dimethylsulfoniopropionate lyase in vivo. The polypeptide is Dimethylsulfoniopropionate lyase DddQ (Ruegeria pomeroyi (strain ATCC 700808 / DSM 15171 / DSS-3) (Silicibacter pomeroyi)).